A 70-amino-acid chain; its full sequence is UPF0150 protein TM_1311 (70 aa).

This sequence belongs to the UPF0150 family.

In Thermotoga maritima (strain ATCC 43589 / DSM 3109 / JCM 10099 / NBRC 100826 / MSB8), this protein is UPF0150 protein TM_1311.